A 21-amino-acid polypeptide reads, in one-letter code: Ocellatin-3 (21 aa).

Isoleucine amide is present on Ile-21.

As to expression, expressed by the skin dorsal glands.

It is found in the secreted. Functionally, has hemolytic activity against human erythrocytes and antibacterial activity against the Gram-negative bacterium E.coli. This is Ocellatin-3 from Leptodactylus ocellatus (Argus frog).